We begin with the raw amino-acid sequence, 160 residues long: Snaclec subunit A (160 aa).

Positions 1 to 23 are cleaved as a signal peptide; sequence MGRFILVNLGLLVVAFSLRGSEA. Disulfide bonds link C25-C36, C53-C150, and C125-C142. The region spanning 32-151 is the C-type lectin domain; sequence YDKYCYKVFD…CDFTLPFICK (120 aa).

This sequence belongs to the snaclec family. Heterodimer of subunits A and B; disulfide-linked. As to expression, expressed by the venom gland.

The protein resides in the secreted. In terms of biological role, interferes with one step of hemostasis (modulation of platelet aggregation, or coagulation cascade, for example). The sequence is that of Snaclec subunit A from Philodryas olfersii (Green snake).